Reading from the N-terminus, the 181-residue chain is Cytolethal distending toxin subunit C (181 aa).

The signal sequence occupies residues 1–15; the sequence is MKKLAIVFTMLLIAG. The N-palmitoyl cysteine moiety is linked to residue cysteine 16. The S-diacylglycerol cysteine moiety is linked to residue cysteine 16. In terms of domain architecture, Ricin B-type lectin spans 79–181; that stretch reads QSGWIMIRTP…NPLNTESPII (103 aa).

Heterotrimer of 3 subunits, CdtA, CdtB and CdtC.

The protein resides in the cell outer membrane. Part of the tripartite complex that is required for the CDT activity. CdtC, along with CdtA, probably forms a heterodimeric subunit required for the delivery of CdtB. In Escherichia coli, this protein is Cytolethal distending toxin subunit C (cdtC).